Consider the following 248-residue polypeptide: Ribosomal RNA small subunit methyltransferase G (248 aa).

S-adenosyl-L-methionine contacts are provided by residues Gly85, Phe90, 108-110, 137-138, and Arg156; these read DSS and AE.

This sequence belongs to the methyltransferase superfamily. RNA methyltransferase RsmG family.

It is found in the cytoplasm. Its function is as follows. Specifically methylates the N7 position of a guanine in 16S rRNA. This chain is Ribosomal RNA small subunit methyltransferase G, found in Prochlorococcus marinus (strain NATL2A).